A 156-amino-acid polypeptide reads, in one-letter code: Small ribosomal subunit protein uS7 (156 aa).

The protein belongs to the universal ribosomal protein uS7 family. Part of the 30S ribosomal subunit. Contacts proteins S9 and S11.

Its function is as follows. One of the primary rRNA binding proteins, it binds directly to 16S rRNA where it nucleates assembly of the head domain of the 30S subunit. Is located at the subunit interface close to the decoding center, probably blocks exit of the E-site tRNA. This chain is Small ribosomal subunit protein uS7, found in Brucella melitensis biotype 1 (strain ATCC 23456 / CCUG 17765 / NCTC 10094 / 16M).